The following is a 241-amino-acid chain: tRNA (guanine-N(7)-)-methyltransferase (241 aa).

Residues 1–10 (MTESNDTPIQ) are compositionally biased toward polar residues. The interval 1–20 (MTESNDTPIQTEEGDERQHR) is disordered. S-adenosyl-L-methionine is bound by residues Glu-71, Glu-96, Asp-123, and Asp-146. Asp-146 is an active-site residue. Substrate-binding positions include Lys-150, Asp-182, and 219–222 (TKFE).

The protein belongs to the class I-like SAM-binding methyltransferase superfamily. TrmB family.

The enzyme catalyses guanosine(46) in tRNA + S-adenosyl-L-methionine = N(7)-methylguanosine(46) in tRNA + S-adenosyl-L-homocysteine. It participates in tRNA modification; N(7)-methylguanine-tRNA biosynthesis. Catalyzes the formation of N(7)-methylguanine at position 46 (m7G46) in tRNA. The chain is tRNA (guanine-N(7)-)-methyltransferase from Pseudomonas fluorescens (strain Pf0-1).